The following is a 51-amino-acid chain: uncharacterized protein (51 aa).

A helical transmembrane segment spans residues 20-42 (NFFSRMWNAVVFGFGAAIGASVA).

It localises to the membrane. This is an uncharacterized protein from Schizosaccharomyces pombe (strain 972 / ATCC 24843) (Fission yeast).